A 315-amino-acid polypeptide reads, in one-letter code: MSLLSDLINLNLSDTTEKIIAEYIWVGGSGVDLRSKARTLSGPVNDPSKLPKWNYDGSSTGQAPGKDSEVILWPQAIFKDPFRRGNNILVICDTYTPSGKPIPTNKRHAAAKIFSHPDVAAEEPWFGIEQEYTLLQKDIHWPIGMALGGFPGPQGPYYCGTGAEKAFGRDIVDSHYKACLYAGINISGINAEVMPGQWEFQVGPSIGISAGDELWVARYILERITEIAGVVLSLDPKPIPGDWNGAGAHTNYSTKSMRNDGGYEVIKQAIEKLEKRHNEHIAAYGEGNERRLTGRHETADISTFSWGVANRGASI.

The region spanning 19-99 (IIAEYIWVGG…VICDTYTPSG (81 aa)) is the GS beta-grasp domain. Residues 106–315 (KRHAAAKIFS…WGVANRGASI (210 aa)) enclose the GS catalytic domain.

Belongs to the glutamine synthetase family. Homooctamer.

It localises to the cytoplasm. It catalyses the reaction L-glutamate + NH4(+) + ATP = L-glutamine + ADP + phosphate + H(+). This chain is Glutamine synthetase nodule isozyme, found in Lupinus angustifolius (Narrow-leaved blue lupine).